The sequence spans 1065 residues: Ceruloplasmin (1065 aa).

Positions 1 to 19 (MKILILGIFLFLCSTPAWA) are cleaved as a signal peptide. Plastocyanin-like domains lie at 20-200 (KEKH…LIIC) and 209-357 (KEKH…VQEC). Positions 55, 64, and 67 each coordinate Na(+). Histidine 120 and histidine 122 together coordinate Cu(2+). Histidine 120 contacts O2. Lysine 128 is a Ca(2+) binding site. N-linked (GlcNAc...) (complex) asparagine glycosylation occurs at asparagine 138. Glutamine 143, aspartate 146, and aspartate 147 together coordinate Ca(2+). Cysteine 174 and cysteine 200 are joined by a disulfide. Cu(2+)-binding residues include histidine 180 and histidine 182. Histidine 180 is an O2 binding site. Serine 256 serves as a coordination point for Na(+). The cysteines at positions 276 and 357 are disulfide-linked. Cu(2+) contacts are provided by histidine 295, cysteine 338, and histidine 343. 2 N-linked (GlcNAc...) (complex) asparagine glycosylation sites follow: asparagine 358 and asparagine 397. 2 Plastocyanin-like domains span residues 370–560 (HVRH…MKIC) and 570–718 (RQKD…VNQC). Na(+) contacts are provided by phenylalanine 408, glycine 417, and tyrosine 420. Cysteines 534 and 560 form a disulfide. The N-linked (GlcNAc...) asparagine glycan is linked to asparagine 588. Serine 617 is a Na(+) binding site. Cysteines 637 and 718 form a disulfide. 4 residues coordinate Cu(2+): histidine 656, cysteine 699, histidine 704, and methionine 709. Catalysis depends on cysteine 699, which acts as the Nucleophile; for glutathione peroxidase activity. Residue serine 722 is modified to Phosphoserine; by FAM20C. Plastocyanin-like domains lie at 730 to 900 (GERT…LIVC) and 908 to 1061 (FNPR…QNED). An N-linked (GlcNAc...) (complex) asparagine glycan is attached at asparagine 762. Positions 767, 776, and 779 each coordinate Na(+). An intrachain disulfide couples cysteine 874 to cysteine 900. Asparagine 926 carries N-linked (GlcNAc...) asparagine glycosylation. Serine 955 is a binding site for Na(+). Cu(2+) is bound by residues histidine 994, histidine 997, histidine 999, histidine 1039, cysteine 1040, histidine 1041, histidine 1045, and methionine 1050. 2 residues coordinate O2: histidine 997 and histidine 999. Histidine 1041 is a binding site for O2.

It belongs to the multicopper oxidase family. Found in a complex with MPO and LTF; interacts directly with MPO and LTF, which allows Fe(3+) incorporation into LTF, activation of CP ferroxidase activity and protection of CP antioxidant properties by MPO. Cu(2+) is required as a cofactor. As to expression, expressed by the liver and secreted in plasma.

Its subcellular location is the secreted. It catalyses the reaction 4 Fe(2+) + O2 + 4 H(+) = 4 Fe(3+) + 2 H2O. The enzyme catalyses 4 Cu(+) + O2 + 4 H(+) = 4 Cu(2+) + 2 H2O. The catalysed reaction is a hydroperoxide + 2 glutathione = an alcohol + glutathione disulfide + H2O. It carries out the reaction 4 nitric oxide + O2 + 2 H2O = 4 nitrite + 4 H(+). It catalyses the reaction 2 glutathione + H2O2 = glutathione disulfide + 2 H2O. Its function is as follows. Multifunctional blue, copper-binding (6-7 atoms per molecule) glycoprotein. It has ferroxidase activity oxidizing Fe(2+) to Fe(3+) without releasing radical oxygen species. It is involved in iron transport across the cell membrane. Copper ions provide a large number of enzymatic activites. Oxidizes highly toxic ferrous ions to the ferric state for further incorporation onto apo-transferrins, catalyzes Cu(+) oxidation and promotes the oxidation of biogenic amines such as norepinephrin and serotonin. Provides Cu(2+) ions for the ascorbate-mediated deaminase degradation of the heparan sulfate chains of GPC1. Has glutathione peroxidase-like activity, can remove both hydrogen peroxide and lipid hydroperoxide in the presence of thiols. Also shows NO-oxidase and NO2 synthase activities that determine endocrine NO homeostasis. The polypeptide is Ceruloplasmin (Homo sapiens (Human)).